Consider the following 367-residue polypeptide: Chorismate synthase (367 aa).

Residue arginine 48 participates in NADP(+) binding. Residues 125-127 (RSS), 243-244 (NA), glycine 283, 298-302 (KPTSS), and arginine 324 contribute to the FMN site.

This sequence belongs to the chorismate synthase family. In terms of assembly, homotetramer. Requires FMNH2 as cofactor.

It catalyses the reaction 5-O-(1-carboxyvinyl)-3-phosphoshikimate = chorismate + phosphate. It functions in the pathway metabolic intermediate biosynthesis; chorismate biosynthesis; chorismate from D-erythrose 4-phosphate and phosphoenolpyruvate: step 7/7. In terms of biological role, catalyzes the anti-1,4-elimination of the C-3 phosphate and the C-6 proR hydrogen from 5-enolpyruvylshikimate-3-phosphate (EPSP) to yield chorismate, which is the branch point compound that serves as the starting substrate for the three terminal pathways of aromatic amino acid biosynthesis. This reaction introduces a second double bond into the aromatic ring system. The chain is Chorismate synthase from Psychrobacter cryohalolentis (strain ATCC BAA-1226 / DSM 17306 / VKM B-2378 / K5).